A 106-amino-acid chain; its full sequence is Putative protein SH (106 aa).

Residues 48–106 (HSQQNNSGHQFGDRFHSKGHQDTEGRILWKEASTRTTDSTETADTQLVQRQGNGGICLS) form a disordered region. Positions 58–80 (FGDRFHSKGHQDTEGRILWKEAS) are enriched in basic and acidic residues. Low complexity predominate over residues 81–92 (TRTTDSTETADT).

In terms of tissue distribution, heart.

In terms of biological role, may be involved with the regulation of GNRH gene expression. It is not known if this protein is transcribed. The chain is Putative protein SH from Rattus norvegicus (Rat).